Consider the following 269-residue polypeptide: MISLSDLRKFKAEGRKFSCLTCYDASMAKAMELAEIDTILIGDSLGMAIQGRDSTLPVTVEDMAYHTAAVRRGNQHALIMTDLPFMSYATLKDALQNAKTVMQAGAQMIKIEGGAWLSETVQVLTRNGVPVCVHLGLTPQSVHVFGGYKLQARTREAADQLIADCTAVVEAGAAVLLLECVPAQLGQEIAELFPNTPVIGIGAGNATDGQVLVVQDMLGLTFGRVARFVRNFMKEQSGETAILDAFKAFHAAVQDQSFPAKEHTFQVEL.

Positions 43 and 82 each coordinate Mg(2+). 3-methyl-2-oxobutanoate-binding positions include 43-44 (DS), Asp82, and Lys110. Glu112 is a binding site for Mg(2+). Residue Glu179 is the Proton acceptor of the active site.

It belongs to the PanB family. As to quaternary structure, homodecamer; pentamer of dimers. The cofactor is Mg(2+).

The protein resides in the cytoplasm. The enzyme catalyses 3-methyl-2-oxobutanoate + (6R)-5,10-methylene-5,6,7,8-tetrahydrofolate + H2O = 2-dehydropantoate + (6S)-5,6,7,8-tetrahydrofolate. It functions in the pathway cofactor biosynthesis; (R)-pantothenate biosynthesis; (R)-pantoate from 3-methyl-2-oxobutanoate: step 1/2. Functionally, catalyzes the reversible reaction in which hydroxymethyl group from 5,10-methylenetetrahydrofolate is transferred onto alpha-ketoisovalerate to form ketopantoate. This Acinetobacter baumannii (strain SDF) protein is 3-methyl-2-oxobutanoate hydroxymethyltransferase.